Here is a 352-residue protein sequence, read N- to C-terminus: Ion-translocating oxidoreductase complex subunit D (352 aa).

4 consecutive transmembrane segments (helical) span residues 20–40 (IMLLVLLAAVPGIAAQLWFFG), 42–62 (GTLVQILLASVSTLLAEALVL), 89–109 (IPPLAPWWMVVLGTVFAVIIA), and 123–143 (PAMIGYVVLLISFPVQMTSWL). Thr-187 is subject to FMN phosphoryl threonine. The next 5 helical transmembrane spans lie at 214–234 (ILAGAGWQWVNLAWLAGGLWL), 242–262 (WHIPLSFLVTLALCATLGWLF), 267–287 (LAAPQIHLLSGATMLGAFFIL), 301–321 (LIFGALAGLLVWLIRSFGGYP), and 322–342 (DGVAFAVLLANITVPLIDYYT).

The protein belongs to the NqrB/RnfD family. The complex is composed of six subunits: RsxA, RsxB, RsxC, RsxD, RsxE and RsxG. The cofactor is FMN.

Its subcellular location is the cell inner membrane. Part of a membrane-bound complex that couples electron transfer with translocation of ions across the membrane. Required to maintain the reduced state of SoxR. The protein is Ion-translocating oxidoreductase complex subunit D of Shigella sonnei (strain Ss046).